Here is a 457-residue protein sequence, read N- to C-terminus: Glycine receptor subunit alpha-1 (457 aa).

An N-terminal signal peptide occupies residues 1–28 (MYSFNTLRFYLWETIVFFSLAASKEAEA). Residues 29–250 (ARSAPKPMSP…RFHLERQMGY (222 aa)) lie on the Extracellular side of the membrane. Asn-66 carries N-linked (GlcNAc...) asparagine glycosylation. Positions 93 and 157 each coordinate glycine. A disulfide bond links Cys-166 and Cys-180. Glu-220 and Asp-222 together coordinate Zn(2+). Cys-226 and Cys-237 form a disulfide bridge. 230–235 (YNTGKF) is a strychnine binding site. Thr-232 serves as a coordination point for glycine. Residue His-243 participates in Zn(2+) binding. A helical transmembrane segment spans residues 251-272 (YLIQMYIPSLLIVILSWISFWI). Residues 273–277 (NMDAA) lie on the Cytoplasmic side of the membrane. A helical transmembrane segment spans residues 278–298 (PARVGLGITTVLTMTTQSSGS). The Extracellular segment spans residues 299–309 (RASLPKVSYVK). Residues 310-330 (AIDIWMAVCLLFVFSALLEYA) traverse the membrane as a helical segment. The Cytoplasmic portion of the chain corresponds to 331–425 (AVNFVSRQHK…FIQRAKKIDK (95 aa)). The segment at 391–410 (KGANNNNTTNPPPAPSKSPE) is disordered. The chain crosses the membrane as a helical span at residues 426–446 (ISRIGFPMAFLIFNMFYWIIY). The Extracellular portion of the chain corresponds to 447 to 457 (KIVRREDVHNK).

This sequence belongs to the ligand-gated ion channel (TC 1.A.9) family. Glycine receptor (TC 1.A.9.3) subfamily. GLRA1 sub-subfamily. As to quaternary structure, interacts with GLRB to form heteropentameric channels; this is probably the predominant form in vivo. Heteropentamer composed of four GLRA1 subunits and one GLRB subunit. Heteropentamer composed of two GLRA1 and three GLRB. Heteropentamer composed of three GLRA1 and two GLRB. Homopentamer (in vitro). Both homopentamers and heteropentamers form functional ion channels, but their characteristics are subtly different. In terms of tissue distribution, detected in spinal cord neurons. Detected in brain stem neurons. Detected at lower levels in hippocampus and cerebellum. Detected in the inner plexiform layer of the retina (at protein level).

It is found in the postsynaptic cell membrane. Its subcellular location is the synapse. The protein resides in the perikaryon. The protein localises to the cell projection. It localises to the dendrite. It is found in the cell membrane. The enzyme catalyses chloride(in) = chloride(out). Channel opening is triggered by extracellular glycine. Channel characteristics depend on the subunit composition; heteropentameric channels are activated by lower glycine levels and display faster desensitization. Channel opening is also triggered by taurine and beta-alanine. Inhibited by strychnine. Strychnine binding locks the channel in a closed conformation and prevents channel opening in response to extracellular glycine. Inhibited by picrotoxin. Channel activity is enhanced by 5 uM Zn(2+) and inhibited by 100 uM Zn(2+). Its function is as follows. Subunit of heteromeric glycine-gated chloride channels. Plays an important role in the down-regulation of neuronal excitability. Contributes to the generation of inhibitory postsynaptic currents. Channel activity is potentiated by ethanol. Potentiation of channel activity by intoxicating levels of ethanol contribute to the sedative effects of ethanol. This chain is Glycine receptor subunit alpha-1 (Glra1), found in Mus musculus (Mouse).